Reading from the N-terminus, the 312-residue chain is Malate dehydrogenase (312 aa).

Residues 12–17 (GAGFTG) and aspartate 36 contribute to the NAD(+) site. Substrate is bound by residues arginine 87 and arginine 93. Residues asparagine 100 and 123–125 (LTN) each bind NAD(+). Asparagine 125 contacts substrate. Position 149 is a phosphoserine (serine 149). Arginine 156 serves as a coordination point for substrate. The active-site Proton acceptor is histidine 180.

This sequence belongs to the LDH/MDH superfamily. MDH type 3 family.

The enzyme catalyses (S)-malate + NAD(+) = oxaloacetate + NADH + H(+). In terms of biological role, catalyzes the reversible oxidation of malate to oxaloacetate. The protein is Malate dehydrogenase of Bacillus licheniformis (strain ATCC 14580 / DSM 13 / JCM 2505 / CCUG 7422 / NBRC 12200 / NCIMB 9375 / NCTC 10341 / NRRL NRS-1264 / Gibson 46).